A 198-amino-acid polypeptide reads, in one-letter code: FMN-dependent NADH:quinone oxidoreductase (198 aa).

96 to 99 (MYNF) is a binding site for FMN.

It belongs to the azoreductase type 1 family. Homodimer. FMN serves as cofactor.

The enzyme catalyses 2 a quinone + NADH + H(+) = 2 a 1,4-benzosemiquinone + NAD(+). It catalyses the reaction N,N-dimethyl-1,4-phenylenediamine + anthranilate + 2 NAD(+) = 2-(4-dimethylaminophenyl)diazenylbenzoate + 2 NADH + 2 H(+). Its function is as follows. Quinone reductase that provides resistance to thiol-specific stress caused by electrophilic quinones. Functionally, also exhibits azoreductase activity. Catalyzes the reductive cleavage of the azo bond in aromatic azo compounds to the corresponding amines. The polypeptide is FMN-dependent NADH:quinone oxidoreductase (Burkholderia mallei (strain ATCC 23344)).